The primary structure comprises 359 residues: tRNA-specific 2-thiouridylase MnmA (359 aa).

ATP is bound by residues 6–13 (AMSGGVDS) and Leu-32. Catalysis depends on Cys-97, which acts as the Nucleophile. Cys-97 and Cys-195 are disulfide-bonded. Gly-121 provides a ligand contact to ATP. An interaction with tRNA region spans residues 144–146 (KDQ). The active-site Cysteine persulfide intermediate is Cys-195.

This sequence belongs to the MnmA/TRMU family.

It is found in the cytoplasm. It carries out the reaction S-sulfanyl-L-cysteinyl-[protein] + uridine(34) in tRNA + AH2 + ATP = 2-thiouridine(34) in tRNA + L-cysteinyl-[protein] + A + AMP + diphosphate + H(+). Its function is as follows. Catalyzes the 2-thiolation of uridine at the wobble position (U34) of tRNA, leading to the formation of s(2)U34. In Tropheryma whipplei (strain Twist) (Whipple's bacillus), this protein is tRNA-specific 2-thiouridylase MnmA.